We begin with the raw amino-acid sequence, 125 residues long: Small ribosomal subunit protein uS12 (125 aa).

The segment at 1 to 24 is disordered; that stretch reads MPTISQLVRKPRKAKRTKSKVPAL. The segment covering 9–19 has biased composition (basic residues); it reads RKPRKAKRTKS. A 3-methylthioaspartic acid modification is found at aspartate 89. Residues 101-125 form a disordered region; the sequence is SLDTAGVKDRKQARSKYGSKRPKSA. Basic residues predominate over residues 113 to 125; the sequence is ARSKYGSKRPKSA.

The protein belongs to the universal ribosomal protein uS12 family. As to quaternary structure, part of the 30S ribosomal subunit. Contacts proteins S8 and S17. May interact with IF1 in the 30S initiation complex.

In terms of biological role, with S4 and S5 plays an important role in translational accuracy. Functionally, interacts with and stabilizes bases of the 16S rRNA that are involved in tRNA selection in the A site and with the mRNA backbone. Located at the interface of the 30S and 50S subunits, it traverses the body of the 30S subunit contacting proteins on the other side and probably holding the rRNA structure together. The combined cluster of proteins S8, S12 and S17 appears to hold together the shoulder and platform of the 30S subunit. This Nitrosomonas europaea (strain ATCC 19718 / CIP 103999 / KCTC 2705 / NBRC 14298) protein is Small ribosomal subunit protein uS12.